Consider the following 381-residue polypeptide: Queuine tRNA-ribosyltransferase (381 aa).

The active-site Proton acceptor is the Asp-96. Substrate is bound by residues 96-100, Asp-150, Gln-193, and Gly-220; that span reads DSGGF. The segment at 251–257 is RNA binding; that stretch reads GVGSPDS. Asp-270 functions as the Nucleophile in the catalytic mechanism. Positions 275–279 are RNA binding; important for wobble base 34 recognition; the sequence is TRIAR. Cys-308, Cys-310, Cys-313, and His-339 together coordinate Zn(2+).

The protein belongs to the queuine tRNA-ribosyltransferase family. Homodimer. Within each dimer, one monomer is responsible for RNA recognition and catalysis, while the other monomer binds to the replacement base PreQ1. The cofactor is Zn(2+).

It carries out the reaction 7-aminomethyl-7-carbaguanine + guanosine(34) in tRNA = 7-aminomethyl-7-carbaguanosine(34) in tRNA + guanine. It participates in tRNA modification; tRNA-queuosine biosynthesis. Functionally, catalyzes the base-exchange of a guanine (G) residue with the queuine precursor 7-aminomethyl-7-deazaguanine (PreQ1) at position 34 (anticodon wobble position) in tRNAs with GU(N) anticodons (tRNA-Asp, -Asn, -His and -Tyr). Catalysis occurs through a double-displacement mechanism. The nucleophile active site attacks the C1' of nucleotide 34 to detach the guanine base from the RNA, forming a covalent enzyme-RNA intermediate. The proton acceptor active site deprotonates the incoming PreQ1, allowing a nucleophilic attack on the C1' of the ribose to form the product. After dissociation, two additional enzymatic reactions on the tRNA convert PreQ1 to queuine (Q), resulting in the hypermodified nucleoside queuosine (7-(((4,5-cis-dihydroxy-2-cyclopenten-1-yl)amino)methyl)-7-deazaguanosine). The chain is Queuine tRNA-ribosyltransferase from Bacillus licheniformis (strain ATCC 14580 / DSM 13 / JCM 2505 / CCUG 7422 / NBRC 12200 / NCIMB 9375 / NCTC 10341 / NRRL NRS-1264 / Gibson 46).